We begin with the raw amino-acid sequence, 490 residues long: Sec sixty-one protein homolog (490 aa).

Over 1-32 (MSGFRLIDIVKPILPILPEVELPFEKLPFDDK) the chain is Cytoplasmic. The helical transmembrane segment at 33-53 (IVYTIFAGLIYLFAQFPLVGL) threads the bilayer. Residues 54 to 121 (PKATTPNVND…DRELFQSLTK (68 aa)) lie on the Lumenal side of the membrane. Residues 122–142 (VFAIVQYVILTNIFIFAGYFG) traverse the membrane as a helical segment. Residues 143–146 (DDLS) are Cytoplasmic-facing. The chain crosses the membrane as a helical span at residues 147–167 (VVQIGLINFQLVGAGIFTTLL). Topologically, residues 168 to 174 (AEVIDKG) are lumenal. The helical transmembrane segment at 175–195 (FGFSSGAMIINTVVIATNLVA) threads the bilayer. Topologically, residues 196-242 (DTFGVSQIKVGEDDQTEAQGALINLIQGLRSKHKTFIGGIISAFNRD) are cytoplasmic. Residues 243–263 (YLPNLTTTIIVLAIAIIVCYL) form a helical membrane-spanning segment. At 264-293 (QSVRVELPIRSTRARGTNNVYPIKLLYTGC) the chain is on the lumenal side. The helical transmembrane segment at 294–314 (LSVLFSYTILFYIHIFAFVLI) threads the bilayer. At 315-339 (QLVAKNEPTHIICKIMGHYENANNL) the chain is on the cytoplasmic side. Residues 340–360 (LAVPTFPLSLLAPPTSFFKGV) form a helical membrane-spanning segment. Residue Thr361 is a topological domain, lumenal. The chain crosses the membrane as a helical span at residues 362–382 (QQPLTFITYSAFILVTGIWFA). Over 383–421 (DKWQAISGSSARDVALEFKDQGITLMGRREQNVAKELNK) the chain is Cytoplasmic. The helical transmembrane segment at 422–442 (VIPIAAVTGASVLSLITVIGE) threads the bilayer. The Lumenal portion of the chain corresponds to 443-449 (SLGLKGK). A helical transmembrane segment spans residues 450 to 470 (AAGIVVGIAGGFSLLEVITIE). The Cytoplasmic segment spans residues 471–490 (YQQSGGQSALNQVLGVPGAM).

This sequence belongs to the SecY/SEC61-alpha family. As to quaternary structure, component of the heterotrimeric Ssh1 complex, which is composed of SSH1, SBH2 and SSS1.

It localises to the endoplasmic reticulum membrane. Its function is as follows. Part of the Ssh1 complex, which probably is the major component of a channel-forming translocon complex that may function exclusively in the cotranslational pathway of protein endoplasmic reticulum (ER) import. In Saccharomyces cerevisiae (strain ATCC 204508 / S288c) (Baker's yeast), this protein is Sec sixty-one protein homolog (SSH1).